The chain runs to 502 residues: Glycerol kinase (502 aa).

Thr14 is an ADP binding site. 3 residues coordinate ATP: Thr14, Thr15, and Ser16. Thr14 contacts sn-glycerol 3-phosphate. Position 18 (Arg18) interacts with ADP. Residues Arg84, Glu85, Tyr136, and Asp246 each coordinate sn-glycerol 3-phosphate. 5 residues coordinate glycerol: Arg84, Glu85, Tyr136, Asp246, and Gln247. ADP is bound by residues Thr268 and Gly311. ATP contacts are provided by Thr268, Gly311, Gln315, and Gly412. Positions 412 and 416 each coordinate ADP.

The protein belongs to the FGGY kinase family. Homotetramer and homodimer (in equilibrium). Heterodimer with EIIA-Glc. Binds 1 zinc ion per glycerol kinase EIIA-Glc dimer. The zinc ion is important for dimerization.

It carries out the reaction glycerol + ATP = sn-glycerol 3-phosphate + ADP + H(+). It participates in polyol metabolism; glycerol degradation via glycerol kinase pathway; sn-glycerol 3-phosphate from glycerol: step 1/1. Activity of this regulatory enzyme is affected by several metabolites. Allosterically and non-competitively inhibited by fructose 1,6-bisphosphate (FBP) and unphosphorylated phosphocarrier protein EIIA-Glc (III-Glc), an integral component of the bacterial phosphotransferase (PTS) system. Key enzyme in the regulation of glycerol uptake and metabolism. Catalyzes the phosphorylation of glycerol to yield sn-glycerol 3-phosphate. This is Glycerol kinase from Escherichia fergusonii (strain ATCC 35469 / DSM 13698 / CCUG 18766 / IAM 14443 / JCM 21226 / LMG 7866 / NBRC 102419 / NCTC 12128 / CDC 0568-73).